The following is a 269-amino-acid chain: Ubiquinone/menaquinone biosynthesis C-methyltransferase UbiE (269 aa).

S-adenosyl-L-methionine contacts are provided by residues Thr92, Asp113, and 141 to 142 (NA).

It belongs to the class I-like SAM-binding methyltransferase superfamily. MenG/UbiE family.

The catalysed reaction is a 2-demethylmenaquinol + S-adenosyl-L-methionine = a menaquinol + S-adenosyl-L-homocysteine + H(+). The enzyme catalyses a 2-methoxy-6-(all-trans-polyprenyl)benzene-1,4-diol + S-adenosyl-L-methionine = a 5-methoxy-2-methyl-3-(all-trans-polyprenyl)benzene-1,4-diol + S-adenosyl-L-homocysteine + H(+). Its pathway is quinol/quinone metabolism; menaquinone biosynthesis; menaquinol from 1,4-dihydroxy-2-naphthoate: step 2/2. The protein operates within cofactor biosynthesis; ubiquinone biosynthesis. In terms of biological role, methyltransferase required for the conversion of demethylmenaquinol (DMKH2) to menaquinol (MKH2) and the conversion of 2-polyprenyl-6-methoxy-1,4-benzoquinol (DDMQH2) to 2-polyprenyl-3-methyl-6-methoxy-1,4-benzoquinol (DMQH2). In Brucella suis (strain ATCC 23445 / NCTC 10510), this protein is Ubiquinone/menaquinone biosynthesis C-methyltransferase UbiE.